We begin with the raw amino-acid sequence, 614 residues long: MSAQVSKKRGGSNPPKTGQHAASSTTSRTESSATSQTIYERQEVETRTQRTPGGLLLAASSAEVSSGTAGLAGSPLSRHQEKEEFKLLNNRFANYIDTIRAQQEEISVLRRKVETVSSKEVVENQKIKERYNLEIANLRRALDEVSRDLAAAIIERDSLRPERDARLLLDNEKKTLQKRSKDAEAALKDAKNQLAALRDQAKDHDNEIHGLTTENSSLKLQIENLKKDLSQETNLRVDAENRLQSEREKNALLEGIHNEEIVSLRNQRRTEITEVETRMGEEYQSKIVEQLNDLRADLEAVAHEMRLDLERSYQNQLEDSQDLANRYRDEARALLADLSAAQDRIKETQTRSEKQLQELRLQLQRLQAELNGKDDEVQRLQKLLADRQAELQNTHHELSRQIASYQELLDEKIHLDAELATYNALLRTEEERLNMKSPPFPSTPDSQRRGTKRRIADSYTRTRFRNEASATGDIHISEIDAEGQFVRLENKSGQDVVIGGWKLLMVSDNGEDNKTDYKIHSNQVIKAHSSTTIWSANTNVVHEPPADIVMEGRWLVGDHTSVTLSTSDGVEVARREMTQSSTRDDSYLGPSGLPKRSRLVVADSSDHQKNCVIM.

The segment covering 1 to 10 (MSAQVSKKRG) has biased composition (basic residues). The disordered stretch occupies residues 1 to 51 (MSAQVSKKRGGSNPPKTGQHAASSTTSRTESSATSQTIYERQEVETRTQRT). Residues 1-76 (MSAQVSKKRG…GTAGLAGSPL (76 aa)) form a head region. The span at 21–37 (AASSTTSRTESSATSQT) shows a compositional bias: low complexity. Positions 77 to 117 (SRHQEKEEFKLLNNRFANYIDTIRAQQEEISVLRRKVETVS) are coil 1A. The IF rod domain occupies 81–433 (EKEEFKLLNN…ALLRTEEERL (353 aa)). The tract at residues 118–128 (SKEVVENQKIK) is linker 1. The tract at residues 129 to 268 (ERYNLEIANL…EEIVSLRNQR (140 aa)) is coil 1B. Residues 269 to 286 (RTEITEVETRMGEEYQSK) are linker 2. Residues 287 to 426 (IVEQLNDLRA…AELATYNALL (140 aa)) form a coil 2 region. A tail region spans residues 427–611 (RTEEERLNMK…ADSSDHQKNC (185 aa)). Residues 433–454 (LNMKSPPFPSTPDSQRRGTKRR) are disordered. The short motif at 449–458 (RGTKRRIADS) is the Nuclear localization signal element. Positions 462–581 (TRFRNEASAT…VARREMTQSS (120 aa)) constitute an LTD domain. C611 carries S-farnesyl cysteine lipidation. Positions 612–614 (VIM) are cleaved as a propeptide — removed in mature form.

The protein belongs to the intermediate filament family.

It is found in the nucleus inner membrane. Functionally, intermediate filament (IF) protein, component of the nuclear lamina, a fibrous layer on the nucleoplasmic side of the inner nuclear membrane, which is thought to provide a framework for the nuclear envelope. This is Lamin-2 from Hypsibius exemplaris (Freshwater tardigrade).